The primary structure comprises 355 residues: tRNA pseudouridine synthase D (355 aa).

Asp84 (nucleophile) is an active-site residue. A TRUD domain is found at 160–306 (GVPNYFGLQR…MAHERRILRL (147 aa)).

It belongs to the pseudouridine synthase TruD family.

The catalysed reaction is uridine(13) in tRNA = pseudouridine(13) in tRNA. Functionally, responsible for synthesis of pseudouridine from uracil-13 in transfer RNAs. The protein is tRNA pseudouridine synthase D of Pseudomonas aeruginosa (strain LESB58).